The sequence spans 401 residues: ATP phosphoribosyltransferase regulatory subunit (401 aa).

The protein belongs to the class-II aminoacyl-tRNA synthetase family. HisZ subfamily. As to quaternary structure, heteromultimer composed of HisG and HisZ subunits.

It is found in the cytoplasm. It participates in amino-acid biosynthesis; L-histidine biosynthesis; L-histidine from 5-phospho-alpha-D-ribose 1-diphosphate: step 1/9. Functionally, required for the first step of histidine biosynthesis. May allow the feedback regulation of ATP phosphoribosyltransferase activity by histidine. In Cyanothece sp. (strain PCC 7425 / ATCC 29141), this protein is ATP phosphoribosyltransferase regulatory subunit.